The chain runs to 351 residues: Protein RecA (351 aa).

64–71 is a binding site for ATP; that stretch reads GPESSGKT. The interval 330 to 351 is disordered; it reads DRFLQNGGPDPDDGDGDATAEM. Positions 339 to 351 are enriched in acidic residues; sequence DPDDGDGDATAEM.

This sequence belongs to the RecA family.

It localises to the cytoplasm. Can catalyze the hydrolysis of ATP in the presence of single-stranded DNA, the ATP-dependent uptake of single-stranded DNA by duplex DNA, and the ATP-dependent hybridization of homologous single-stranded DNAs. It interacts with LexA causing its activation and leading to its autocatalytic cleavage. This is Protein RecA from Rhizobium leguminosarum bv. viciae.